The sequence spans 276 residues: Ribosomal RNA small subunit methyltransferase A (276 aa).

S-adenosyl-L-methionine is bound by residues N16, L18, G43, E64, D89, and N109.

The protein belongs to the class I-like SAM-binding methyltransferase superfamily. rRNA adenine N(6)-methyltransferase family. RsmA subfamily.

Its subcellular location is the cytoplasm. The enzyme catalyses adenosine(1518)/adenosine(1519) in 16S rRNA + 4 S-adenosyl-L-methionine = N(6)-dimethyladenosine(1518)/N(6)-dimethyladenosine(1519) in 16S rRNA + 4 S-adenosyl-L-homocysteine + 4 H(+). Functionally, specifically dimethylates two adjacent adenosines (A1518 and A1519) in the loop of a conserved hairpin near the 3'-end of 16S rRNA in the 30S particle. May play a critical role in biogenesis of 30S subunits. The protein is Ribosomal RNA small subunit methyltransferase A of Marinobacter nauticus (strain ATCC 700491 / DSM 11845 / VT8) (Marinobacter aquaeolei).